Here is a 69-residue protein sequence, read N- to C-terminus: UPF0337 protein YjbJ (69 aa).

It belongs to the UPF0337 (CsbD) family.

In Escherichia coli O157:H7, this protein is UPF0337 protein YjbJ (yjbJ).